Here is a 1463-residue protein sequence, read N- to C-terminus: Probable oxidoreductase PXDNL (1463 aa).

A signal peptide spans 1 to 23 (MEPRLFCWTTLFLLAGWCLPGLP). The region spanning 24 to 50 (CPSRCLCFKSTVRCMHLMLDHIPQVPQ) is the LRRNT domain. LRR repeat units lie at residues 51–72 (QTTV…AFKK), 75–96 (NLNT…AFEG), 99–120 (NLLY…TFKG), 123–144 (SLEH…TFGD), and 147–168 (RLER…SFSN). The region spanning 180–233 (NALVCDCDLMWLGELLQGFAQHGHTQAAATCEYPRRLHGRAVASVTVEEFNCQS) is the LRRCT domain. Ig-like C2-type domains follow at residues 234 to 322 (PRIT…AMLR), 330 to 414 (PSFV…ANII), 419 to 504 (PQFT…VQLT), and 507 to 596 (PKAL…MFLT). Intrachain disulfides connect Cys255/Cys305, Cys351/Cys398, Cys440/Cys488, Cys532/Cys580, and Cys718/Cys734. Asn387 carries N-linked (GlcNAc...) asparagine glycosylation. His812 acts as the Proton acceptor in catalysis. Asp813 serves as a coordination point for Ca(2+). 2 disulfide bridges follow: Cys832–Cys842 and Cys836–Cys859. Thr891, Tyr893, Asp895, and Ser897 together coordinate Ca(2+). An intrachain disulfide couples Cys944 to Cys953. His1057 serves as a coordination point for heme b. 2 cysteine pairs are disulfide-bonded: Cys1160-Cys1217 and Cys1258-Cys1284. The 59-residue stretch at 1393-1451 (AGCTDVRGVPRKAEERWMKEDCTHCICESGQVTCVVEICPPAPCPSPELVKGTCCPVCR) folds into the VWFC domain.

Belongs to the peroxidase family. XPO subfamily. In terms of assembly, interacts with PXDN; this interaction inhibits the peroxidase activity of PXDN. Requires heme b as cofactor. Post-translationally, phosphorylation by SRC on tyrosine residues is required for targeting to polysomes. In terms of tissue distribution, the 57 kDa isoform PMR1 is the only form detected at protein levels in human cell lines. Expressed in heart.

The protein localises to the secreted. It localises to the endoplasmic reticulum. Its subcellular location is the cell membrane. It is found in the cytoplasm. Its function is as follows. Probable oxidoreductase. Lacks peroxidase activity. Inhibits the peroxidase activity of PXDN through its interaction. In terms of biological role, endonuclease selectively degrading some target mRNAs while they are engaged by translating ribosomes, among which albumin and beta-globin mRNAs. The polypeptide is Probable oxidoreductase PXDNL (Homo sapiens (Human)).